The sequence spans 272 residues: Protein UL11 (272 aa).

The signal sequence occupies residues Met1–Ala31. Residues Cys32 to His224 are Extracellular-facing. N-linked (GlcNAc...) asparagine; by host glycosylation is found at Asn42, Asn93, Asn100, and Asn142. The tract at residues Asn142–His200 is disordered. Residues Thr147–Thr183 show a composition bias toward low complexity. A helical membrane pass occupies residues Leu225–Phe245. The Cytoplasmic segment spans residues Tyr246 to Leu272.

This sequence belongs to the RL11 family. As to quaternary structure, interacts with host PTPRC; this interaction affects T-cell signaling. Post-translationally, glycosylated.

The protein localises to the host cell membrane. The protein resides in the host endoplasmic reticulum. In terms of biological role, plays a role in the modulation of host immune response by modulating T-cell function. Interacts with host PTPRC/CD45 and thereby reduces host TCR signaling and T-cell proliferation. The chain is Protein UL11 (UL11) from Human cytomegalovirus (strain Merlin) (HHV-5).